We begin with the raw amino-acid sequence, 502 residues long: Ubiquitin-associated protein 1 (502 aa).

The interaction with ESCRT-I stretch occupies residues 1–95; the sequence is MASKKLGADF…AEAKVNSKSG (95 aa). One can recognise a UMA domain in the interval 17-63; that stretch reads LDDVPFKTGDKFKTPAKVGLPIGFSLPDCLQVVREVQYDFSLEKKTI. The segment covering 86–100 has biased composition (basic and acidic residues); the sequence is AEAKVNSKSGPEGDS. The interval 86 to 117 is disordered; sequence AEAKVNSKSGPEGDSKMSFSKTHSTATMPPPI. Residues 102–112 show a composition bias toward polar residues; sequence MSFSKTHSTAT. A phosphoserine mark is found at S146, S205, and S289. The segment at 260 to 290 is interaction with PTPN23; the sequence is VSNIKSLSFPKLDSDDSNQKTAKLASTFHST. UBA domains lie at 389–430 and 451–498; these read SPSE…LFAH and QCSE…LMAR.

In terms of assembly, component of an ESCRT-I complex (endosomal sorting complex required for transport I) which consists of TSG101, VPS28, VPS37A and UBAP1 in a 1:1:1:1 stoichiometry. Interacts with PTPN23. Interacts (via UBA domains) with ubiquitinated proteins. In terms of tissue distribution, ubiquitous. Highly expressed in heart, brain, placenta, lung, liver, skeletal muscle and pancreas.

Its subcellular location is the cytoplasm. The protein resides in the cytosol. It localises to the endosome. In terms of biological role, component of the ESCRT-I complex, a regulator of vesicular trafficking process. Binds to ubiquitinated cargo proteins and is required for the sorting of endocytic ubiquitinated cargos into multivesicular bodies (MVBs). Plays a role in the proteasomal degradation of ubiquitinated cell-surface proteins, such as EGFR and BST2. The protein is Ubiquitin-associated protein 1 of Homo sapiens (Human).